Reading from the N-terminus, the 251-residue chain is MTDYFTPENKLPGSREYLSPSGRFKLTVENYKTGKGCWNYTKGIVTNVDNGEIISEIKRNYSVFTHNFFIKNQSEWLFCGRTYMSQCFINLETGEEFDNSDKINKESLCWANVMANPSGTILAVEACIWGGPYVLDFYDFSDPSKGWSHIPYHNYDDDYDLTLFRTYELKWLSDSEFQYQNNREIHEKSGKEIYDMDLDEITSTKNDNFIEVLYYKVILSKVGSNMEFTSTETSPEHQADLKDDNSDISST.

Residues 229-251 (TSTETSPEHQADLKDDNSDISST) form a disordered region. The span at 234-245 (SPEHQADLKDDN) shows a compositional bias: basic and acidic residues.

This is an uncharacterized protein from Acanthamoeba polyphaga (Amoeba).